A 198-amino-acid polypeptide reads, in one-letter code: MSMGSRYAVKLTTDFDNPKWIARHKHMFNFLDINSNGQINLNEMVHKASNIICKKLGATEEQTKRHQKCVEDFFGGAGLEYDKDTTWPEYIEGWKRLAKTELERHSKNQVTLIRLWGDALFDIIDKDRNGSVSLDEWIQYTHCAGIQQSRGQCEATFAHCDLDGDGKLDVDEMTRQHLGFWYSVDPTCEGLYGGAVPY.

The propeptide occupies 1-8; the sequence is MSMGSRYA. 3 consecutive EF-hand domains span residues 19-54, 118-147, and 148-183; these read KWIA…IICK, DALF…AGIQ, and QSRG…FWYS. Ca(2+) is bound by residues Asp32, Asn34, Asn36, Gln38, Glu43, Asp125, Asp127, Asn129, Ser131, Glu136, Asp161, Asp163, Asp165, Lys167, and Glu172.

It belongs to the aequorin family.

Ca(2+)-dependent bioluminescence photoprotein. Displays an emission peak at 470 nm (blue light). Trace amounts of calcium ion trigger the intramolecular oxidation of the chromophore, coelenterazine into coelenteramide and CO(2) with the concomitant emission of light. This Mitrocoma cellularia (Cross jellyfish) protein is Mitrocomin (MI17).